The sequence spans 202 residues: Small ribosomal subunit protein uS4c (202 aa).

The 69-residue stretch at 90–158 folds into the S4 RNA-binding domain; it reads MRLDNIIFRL…MKRSRDSYEK (69 aa).

The protein belongs to the universal ribosomal protein uS4 family. As to quaternary structure, part of the 30S ribosomal subunit. Contacts protein S5. The interaction surface between S4 and S5 is involved in control of translational fidelity.

The protein localises to the plastid. It localises to the chloroplast. Functionally, one of the primary rRNA binding proteins, it binds directly to 16S rRNA where it nucleates assembly of the body of the 30S subunit. In terms of biological role, with S5 and S12 plays an important role in translational accuracy. In Anthoceros angustus (Hornwort), this protein is Small ribosomal subunit protein uS4c (rps4).